A 452-amino-acid chain; its full sequence is Fructose-2,6-bisphosphatase (452 aa).

Residues 1–223 (MGYSTISNDN…VFYVMNIRPK (223 aa)) are 6-phosphofructo-2-kinase. Residue 20 to 28 (GLPARGKSF) coordinates ATP. Arg-53 and Arg-78 together coordinate beta-D-fructose 6-phosphate. The active site involves Asp-104. Beta-D-fructose 6-phosphate contacts are provided by Thr-106 and Arg-112. Position 143-148 (143-148 (NAKDIG)) interacts with ATP. The beta-D-fructose 6-phosphate site is built by Arg-169 and Tyr-173. The segment at 224 to 452 (PKYIWLSRHG…LNDSPLEDKF (229 aa)) is fructose-2,6-bisphosphatase. Arg-231 is a binding site for beta-D-fructose 2,6-bisphosphate. The active-site Tele-phosphohistidine intermediate is the His-232. Residues Asn-238 and Gly-244 each contribute to the beta-D-fructose 2,6-bisphosphate site. Glu-302 serves as the catalytic Proton donor/acceptor. Beta-D-fructose 2,6-bisphosphate contacts are provided by Tyr-313, Arg-327, Lys-331, Tyr-342, Gln-368, and Arg-372. 324-327 (FKAR) lines the ATP pocket. Residues 368–372 (QAVLR) and Tyr-404 each bind ATP. Residues Ser-435 and Ser-446 each carry the phosphoserine modification.

This sequence in the C-terminal section; belongs to the phosphoglycerate mutase family.

It carries out the reaction beta-D-fructose 2,6-bisphosphate + H2O = beta-D-fructose 6-phosphate + phosphate. Its activity is regulated as follows. Inhibited by fructose 6-P, activated by glycerol 3-P. Its function is as follows. Monofunctional, high-specificity fructose-2,6-bisphosphatase, which releases phosphate from the 2-position of fructose 2,6-bisphosphate. Has no detectable 6-phosphofructo-2-kinase activity. This chain is Fructose-2,6-bisphosphatase, found in Saccharomyces cerevisiae (strain ATCC 204508 / S288c) (Baker's yeast).